We begin with the raw amino-acid sequence, 465 residues long: Poly(A) polymerase I (465 aa).

Active-site residues include D80, D82, and D162. Positions 429–465 (SAPPDQKGMLNELDEEPSPRRRTRRPRKRAPRREGTA) are disordered. Basic residues predominate over residues 448-459 (RRRTRRPRKRAP).

It belongs to the tRNA nucleotidyltransferase/poly(A) polymerase family.

It catalyses the reaction RNA(n) + ATP = RNA(n)-3'-adenine ribonucleotide + diphosphate. Adds poly(A) tail to the 3' end of many RNAs, which usually targets these RNAs for decay. Plays a significant role in the global control of gene expression, through influencing the rate of transcript degradation, and in the general RNA quality control. This Escherichia coli O157:H7 protein is Poly(A) polymerase I.